The sequence spans 349 residues: Putative nuclease HARBI1 (349 aa).

The a divalent metal cation site is built by D149, D199, D225, and E261. The DDE Tnp4 domain occupies 149–300 (DCIHVAIKAP…IILACCVLHN (152 aa)).

The protein belongs to the HARBI1 family. As to quaternary structure, interacts with NAIF1. A divalent metal cation is required as a cofactor. Detected in adult brain, eye, nerve tissue and lung. Detected in embryo.

It localises to the nucleus. The protein resides in the cytoplasm. Functionally, transposase-derived protein that may have nuclease activity (Potential). Does not have transposase activity. In Mus musculus (Mouse), this protein is Putative nuclease HARBI1 (Harbi1).